The chain runs to 258 residues: Imidazole glycerol phosphate synthase subunit HisF (258 aa).

Active-site residues include Asp-11 and Asp-130.

Belongs to the HisA/HisF family. As to quaternary structure, heterodimer of HisH and HisF.

Its subcellular location is the cytoplasm. It carries out the reaction 5-[(5-phospho-1-deoxy-D-ribulos-1-ylimino)methylamino]-1-(5-phospho-beta-D-ribosyl)imidazole-4-carboxamide + L-glutamine = D-erythro-1-(imidazol-4-yl)glycerol 3-phosphate + 5-amino-1-(5-phospho-beta-D-ribosyl)imidazole-4-carboxamide + L-glutamate + H(+). It functions in the pathway amino-acid biosynthesis; L-histidine biosynthesis; L-histidine from 5-phospho-alpha-D-ribose 1-diphosphate: step 5/9. Functionally, IGPS catalyzes the conversion of PRFAR and glutamine to IGP, AICAR and glutamate. The HisF subunit catalyzes the cyclization activity that produces IGP and AICAR from PRFAR using the ammonia provided by the HisH subunit. This Yersinia pseudotuberculosis serotype IB (strain PB1/+) protein is Imidazole glycerol phosphate synthase subunit HisF.